Here is a 359-residue protein sequence, read N- to C-terminus: DNA replication and repair protein RecF (359 aa).

30–37 (GPNGSGKT) is a binding site for ATP.

It belongs to the RecF family.

The protein resides in the cytoplasm. The RecF protein is involved in DNA metabolism; it is required for DNA replication and normal SOS inducibility. RecF binds preferentially to single-stranded, linear DNA. It also seems to bind ATP. The polypeptide is DNA replication and repair protein RecF (Psychromonas ingrahamii (strain DSM 17664 / CCUG 51855 / 37)).